A 398-amino-acid chain; its full sequence is Phosphoglycerate kinase (398 aa).

Substrate is bound by residues 21–23, Arg36, 59–62, Arg119, and Arg157; these read DFN and HLGR. Residues Lys208, Gly296, Glu327, and 354-357 contribute to the ATP site; that span reads GGDS.

Belongs to the phosphoglycerate kinase family. In terms of assembly, monomer.

The protein resides in the cytoplasm. It carries out the reaction (2R)-3-phosphoglycerate + ATP = (2R)-3-phospho-glyceroyl phosphate + ADP. It participates in carbohydrate degradation; glycolysis; pyruvate from D-glyceraldehyde 3-phosphate: step 2/5. In Lactococcus lactis subsp. cremoris (strain MG1363), this protein is Phosphoglycerate kinase.